We begin with the raw amino-acid sequence, 562 residues long: Probable Xaa-Pro aminopeptidase PEPP (562 aa).

Positions 358, 369, 492, and 532 each coordinate Mn(2+).

This sequence belongs to the peptidase M24B family. Requires Mn(2+) as cofactor.

It catalyses the reaction Release of any N-terminal amino acid, including proline, that is linked to proline, even from a dipeptide or tripeptide.. Its function is as follows. Catalyzes the removal of a penultimate prolyl residue from the N-termini of peptides. The protein is Probable Xaa-Pro aminopeptidase PEPP (PEPP) of Leptosphaeria maculans (strain JN3 / isolate v23.1.3 / race Av1-4-5-6-7-8) (Blackleg fungus).